Reading from the N-terminus, the 150-residue chain is uncharacterized protein (150 aa).

The first 23 residues, 1–23, serve as a signal peptide directing secretion; the sequence is MYSILIACLVLLLCLIIYVGHRA.

This sequence belongs to the asfivirus EP152R family.

Its subcellular location is the virion. This is an uncharacterized protein from African swine fever virus (isolate Warthog/Namibia/Wart80/1980) (ASFV).